A 447-amino-acid chain; its full sequence is Tubulin beta-5 chain (447 aa).

Residues glutamine 11, glutamate 69, serine 138, glycine 142, threonine 143, glycine 144, asparagine 204, and asparagine 226 each coordinate GTP. Residue glutamate 69 coordinates Mg(2+). The interval 421–447 (EYQQYQDATADDEEEDYGDEEEDEVAA) is disordered. Acidic residues predominate over residues 429–447 (TADDEEEDYGDEEEDEVAA).

Belongs to the tubulin family. In terms of assembly, dimer of alpha and beta chains. A typical microtubule is a hollow water-filled tube with an outer diameter of 25 nm and an inner diameter of 15 nM. Alpha-beta heterodimers associate head-to-tail to form protofilaments running lengthwise along the microtubule wall with the beta-tubulin subunit facing the microtubule plus end conferring a structural polarity. Microtubules usually have 13 protofilaments but different protofilament numbers can be found in some organisms and specialized cells. Mg(2+) serves as cofactor. Expressed in roots, leaf sheaths, and suspension cultured cells.

The protein localises to the cytoplasm. It is found in the cytoskeleton. Its function is as follows. Tubulin is the major constituent of microtubules, a cylinder consisting of laterally associated linear protofilaments composed of alpha- and beta-tubulin heterodimers. Microtubules grow by the addition of GTP-tubulin dimers to the microtubule end, where a stabilizing cap forms. Below the cap, tubulin dimers are in GDP-bound state, owing to GTPase activity of alpha-tubulin. The chain is Tubulin beta-5 chain (TUBB5) from Oryza sativa subsp. japonica (Rice).